We begin with the raw amino-acid sequence, 911 residues long: DNA ligase 4 (911 aa).

Residues Glu-271, Thr-272, Lys-273, Leu-274, Arg-278, Glu-331, Lys-345, Phe-367, Glu-427, Lys-432, Lys-449, and Lys-451 each coordinate ATP. Catalysis depends on Lys-273, which acts as the N6-AMP-lysine intermediate. Glu-331 serves as a coordination point for Mg(2+). Glu-427 serves as a coordination point for Mg(2+). The segment at Leu-610–Asp-620 is required for catalytic activity. BRCT domains follow at residues Lys-654–Met-743 and Ser-808–Leu-911.

This sequence belongs to the ATP-dependent DNA ligase family. As to quaternary structure, interacts with XRCC4; the LIG4-XRCC4 subcomplex has a 1:2 stoichiometry and XRCC4 is required for LIG4 stability. Component of the core long-range non-homologous end joining (NHEJ) complex (also named DNA-PK complex) composed of PRKDC, LIG4, XRCC4, XRCC6/Ku70, XRCC5/Ku86 and NHEJ1/XLF. Additional component of the NHEJ complex includes PAXX. Following autophosphorylation, PRKDC dissociates from DNA, leading to formation of the short-range NHEJ complex, composed of LIG4, XRCC4, XRCC6/Ku70, XRCC5/Ku86 and NHEJ1/XLF. Interacts with DCLRE1C; the interaction is direct. Interacts with APLF. The cofactor is Mg(2+).

It is found in the nucleus. The enzyme catalyses ATP + (deoxyribonucleotide)n-3'-hydroxyl + 5'-phospho-(deoxyribonucleotide)m = (deoxyribonucleotide)n+m + AMP + diphosphate.. Its function is as follows. DNA ligase involved in DNA non-homologous end joining (NHEJ); required for double-strand break (DSB) repair and V(D)J recombination. Catalyzes the NHEJ ligation step of the broken DNA during DSB repair by resealing the DNA breaks after the gap filling is completed. Joins single-strand breaks in a double-stranded polydeoxynucleotide in an ATP-dependent reaction. LIG4 is mechanistically flexible: it can ligate nicks as well as compatible DNA overhangs alone, while in the presence of XRCC4, it can ligate ends with 2-nucleotides (nt) microhomology and 1-nt gaps. Forms a subcomplex with XRCC4; the LIG4-XRCC4 subcomplex is responsible for the NHEJ ligation step and XRCC4 enhances the joining activity of LIG4. Binding of the LIG4-XRCC4 complex to DNA ends is dependent on the assembly of the DNA-dependent protein kinase complex DNA-PK to these DNA ends. LIG4 regulates nuclear localization of XRCC4. The polypeptide is DNA ligase 4 (Mus musculus (Mouse)).